The chain runs to 148 residues: Deoxyuridine 5'-triphosphate nucleotidohydrolase (148 aa).

Residues 68 to 70 (RSG), Asn-81, 85 to 87 (TID), and Lys-95 contribute to the substrate site.

Belongs to the dUTPase family. The cofactor is Mg(2+).

The catalysed reaction is dUTP + H2O = dUMP + diphosphate + H(+). The protein operates within pyrimidine metabolism; dUMP biosynthesis; dUMP from dCTP (dUTP route): step 2/2. Functionally, this enzyme is involved in nucleotide metabolism: it produces dUMP, the immediate precursor of thymidine nucleotides and it decreases the intracellular concentration of dUTP so that uracil cannot be incorporated into DNA. The chain is Deoxyuridine 5'-triphosphate nucleotidohydrolase from Rickettsia massiliae (strain Mtu5).